The primary structure comprises 146 residues: Large ribosomal subunit protein uL15 (146 aa).

Residues 1 to 51 form a disordered region; sequence MQLNTLKPAEGSKKNRRRVGRGIGSGLGKTAGRGHKGQKSRSGGFHKVGFE. Gly residues predominate over residues 21 to 31; sequence RGIGSGLGKTA.

This sequence belongs to the universal ribosomal protein uL15 family. Part of the 50S ribosomal subunit.

Its function is as follows. Binds to the 23S rRNA. The sequence is that of Large ribosomal subunit protein uL15 from Polynucleobacter asymbioticus (strain DSM 18221 / CIP 109841 / QLW-P1DMWA-1) (Polynucleobacter necessarius subsp. asymbioticus).